A 188-amino-acid polypeptide reads, in one-letter code: Ribosome maturation factor RimM (188 aa).

Positions 112–187 (SDSYYWVDLI…LLTLDWQSDW (76 aa)) constitute a PRC barrel domain.

It belongs to the RimM family. In terms of assembly, binds ribosomal protein uS19.

It localises to the cytoplasm. Its function is as follows. An accessory protein needed during the final step in the assembly of 30S ribosomal subunit, possibly for assembly of the head region. Essential for efficient processing of 16S rRNA. May be needed both before and after RbfA during the maturation of 16S rRNA. It has affinity for free ribosomal 30S subunits but not for 70S ribosomes. This is Ribosome maturation factor RimM from Polynucleobacter asymbioticus (strain DSM 18221 / CIP 109841 / QLW-P1DMWA-1) (Polynucleobacter necessarius subsp. asymbioticus).